A 114-amino-acid polypeptide reads, in one-letter code: Progonadoliberin-2 (114 aa).

The N-terminal stretch at 1–25 is a signal peptide; sequence MASSMLGFLLLLLLLMAAHPGPSEA. The tract at residues 22-80 is disordered; that stretch reads PSEAQHWSHGWYPGGKRASNSPQDPQSALRPPAPSAAQTAHSFRSAALASPEDSVPWEG. G35 is subject to Glycine amide.

The protein belongs to the GnRH family. As to expression, midbrain.

It localises to the secreted. Stimulates the secretion of gonadotropins; it stimulates the secretion of both luteinizing and follicle-stimulating hormones. This Tupaia belangeri (Common tree shrew) protein is Progonadoliberin-2 (GNRH2).